The following is a 577-amino-acid chain: Adenine deaminase (577 aa).

It belongs to the metallo-dependent hydrolases superfamily. Adenine deaminase family. It depends on Mn(2+) as a cofactor.

It catalyses the reaction adenine + H2O + H(+) = hypoxanthine + NH4(+). This Bacillus velezensis (strain DSM 23117 / BGSC 10A6 / LMG 26770 / FZB42) (Bacillus amyloliquefaciens subsp. plantarum) protein is Adenine deaminase.